The following is a 396-amino-acid chain: Elongation factor Tu 1 (396 aa).

Residues 10–206 (KPHINVGTIG…AMDAHIPQPE (197 aa)) enclose the tr-type G domain. Residues 19 to 26 (GHVDHGKT) form a G1 region. 19 to 26 (GHVDHGKT) contributes to the GTP binding site. Threonine 26 lines the Mg(2+) pocket. The segment at 60 to 64 (GITIA) is G2. A G3 region spans residues 81 to 84 (DCPG). Residues 81 to 85 (DCPGH) and 136 to 139 (NKAD) contribute to the GTP site. The interval 136 to 139 (NKAD) is G4. A G5 region spans residues 174–176 (SAL).

The protein belongs to the TRAFAC class translation factor GTPase superfamily. Classic translation factor GTPase family. EF-Tu/EF-1A subfamily. Monomer.

The protein localises to the cytoplasm. It catalyses the reaction GTP + H2O = GDP + phosphate + H(+). GTP hydrolase that promotes the GTP-dependent binding of aminoacyl-tRNA to the A-site of ribosomes during protein biosynthesis. In Halorhodospira halophila (strain DSM 244 / SL1) (Ectothiorhodospira halophila (strain DSM 244 / SL1)), this protein is Elongation factor Tu 1.